A 318-amino-acid polypeptide reads, in one-letter code: MLLQRFFTRALHSTRQLYAGSGGSGGLEKSALAALRKKTGYTFANCKKALEKHNNDVGLAEKWLHEQAQTLGWSKATKVADRATAHGLIGVLIRGNRGAMVELNCETDFVARNDTFKRFVDHVACMCLQYTDLTDFDGDLWKLGFDADALRNLRTEEGRTLGDHLALLIGAIGENATIRRALCFKANNDLKLVGYAHPAPTNVGTTEGITQVGKYGAIVAYRSTHPLLDFEFHKSICQQIVGMKPTKIGEYDKDKPAENKDDETCLIHQEYLLDADKTVGEALQEHNCEIVDYHRFECGEHTERSLEAIIRSQHQSSN.

The transit peptide at M1–Y18 directs the protein to the mitochondrion.

Belongs to the EF-Ts family.

It is found in the mitochondrion. Its function is as follows. Associates with the EF-Tu.GDP complex and induces the exchange of GDP to GTP. It remains bound to the aminoacyl-tRNA.EF-Tu.GTP complex up to the GTP hydrolysis stage on the ribosome. In Drosophila melanogaster (Fruit fly), this protein is Elongation factor Ts, mitochondrial.